A 143-amino-acid polypeptide reads, in one-letter code: MFARILGLDVGTKTVGVSVSDLLGMTAQPVETIKIDSEAGELGFDRLAVLIKEYKPEKVVLGLPKHMNGDEGIRAEASRDYGTKLANEFSLEVAYQDERLTTAQAEKVLIDGGVRRKDRKKSIDKLAAVLILQNYLDAHALKL.

Belongs to the YqgF nuclease family.

It localises to the cytoplasm. Functionally, could be a nuclease involved in processing of the 5'-end of pre-16S rRNA. This chain is Putative pre-16S rRNA nuclease, found in Lactococcus lactis subsp. cremoris (strain SK11).